We begin with the raw amino-acid sequence, 82 residues long: Small ribosomal subunit protein bS16 (82 aa).

This sequence belongs to the bacterial ribosomal protein bS16 family.

The polypeptide is Small ribosomal subunit protein bS16 (Erwinia tasmaniensis (strain DSM 17950 / CFBP 7177 / CIP 109463 / NCPPB 4357 / Et1/99)).